A 420-amino-acid polypeptide reads, in one-letter code: Putative polyketide beta-ketoacyl synthase 1 (420 aa).

A Ketosynthase family 3 (KS3) domain is found at 3–414; it reads QRRVAITGIE…GFQSAMVLTS (412 aa). Active-site for beta-ketoacyl synthase activity residues include C169, H307, and H344.

It belongs to the thiolase-like superfamily. Beta-ketoacyl-ACP synthases family.

It functions in the pathway antifungal biosynthesis; monensin biosynthesis. The sequence is that of Putative polyketide beta-ketoacyl synthase 1 from Streptomyces virginiae (Streptomyces cinnamonensis).